A 185-amino-acid polypeptide reads, in one-letter code: Ribosome-recycling factor (185 aa).

Belongs to the RRF family.

It is found in the cytoplasm. In terms of biological role, responsible for the release of ribosomes from messenger RNA at the termination of protein biosynthesis. May increase the efficiency of translation by recycling ribosomes from one round of translation to another. In Buchnera aphidicola subsp. Acyrthosiphon pisum (strain 5A), this protein is Ribosome-recycling factor.